Here is a 291-residue protein sequence, read N- to C-terminus: Beta-lactamase CTX-M-15 (291 aa).

An N-terminal signal peptide occupies residues 1–28 (MVKKSLRQFTLMATATVTLLLGSVPLYA). Ser73 functions as the Nucleophile; acyl-ester intermediate in the catalytic mechanism. Lys76, Ser133, Glu169, and Ser240 together coordinate a beta-lactam.

This sequence belongs to the class-A beta-lactamase family. As to quaternary structure, monomer.

It is found in the secreted. The catalysed reaction is a beta-lactam + H2O = a substituted beta-amino acid. Inhibited by the beta-lactamase-blocking agents clavulanic acid and avibactam, via a covalent binding to Ser-73. In terms of biological role, extended-spectrum beta-lactamase (ESBL) which confers resistance to penicillins, as well as first, second, third and fourth-generation cephalosporins. Has cefotaxime- and ceftazidime-hydrolyzing activity. Inactive against the carbapenem antibiotics, imipenem, meropenem and ertapenem. In Escherichia coli O25b:H4, this protein is Beta-lactamase CTX-M-15.